Reading from the N-terminus, the 198-residue chain is Na(+)-translocating NADH-quinone reductase subunit E (198 aa).

6 helical membrane passes run Ser-11–Val-31, Phe-39–Val-59, Phe-77–Ile-97, Gly-110–Val-130, Val-140–Ile-160, and Leu-176–Val-196.

This sequence belongs to the NqrDE/RnfAE family. Composed of six subunits; NqrA, NqrB, NqrC, NqrD, NqrE and NqrF.

It localises to the cell inner membrane. It carries out the reaction a ubiquinone + n Na(+)(in) + NADH + H(+) = a ubiquinol + n Na(+)(out) + NAD(+). Its function is as follows. NQR complex catalyzes the reduction of ubiquinone-1 to ubiquinol by two successive reactions, coupled with the transport of Na(+) ions from the cytoplasm to the periplasm. NqrA to NqrE are probably involved in the second step, the conversion of ubisemiquinone to ubiquinol. The polypeptide is Na(+)-translocating NADH-quinone reductase subunit E (Vibrio anguillarum (Listonella anguillarum)).